Here is a 142-residue protein sequence, read N- to C-terminus: Small heat shock protein IbpB (142 aa).

The 112-residue stretch at 26–137 (TAEHQAFPPY…APQRIAISDR (112 aa)) folds into the sHSP domain.

This sequence belongs to the small heat shock protein (HSP20) family. Homodimer. Forms homomultimers of about 100-150 subunits at optimal growth temperatures. Conformation changes to oligomers at high temperatures or high ionic concentrations. The decrease in size of the multimers is accompanied by an increase in chaperone activity.

It is found in the cytoplasm. Associates with aggregated proteins, together with IbpA, to stabilize and protect them from irreversible denaturation and extensive proteolysis during heat shock and oxidative stress. Aggregated proteins bound to the IbpAB complex are more efficiently refolded and reactivated by the ATP-dependent chaperone systems ClpB and DnaK/DnaJ/GrpE. Its activity is ATP-independent. In Enterobacter sp. (strain 638), this protein is Small heat shock protein IbpB.